The following is a 261-amino-acid chain: Taurine import ATP-binding protein TauB (261 aa).

The region spanning 4 to 233 (LQLERIGAQY…RYAAGESARA (230 aa)) is the ABC transporter domain. ATP is bound at residue 38 to 45 (GPSGSGKT).

This sequence belongs to the ABC transporter superfamily. Taurine importer (TC 3.A.1.17.1) family. In terms of assembly, the complex is composed of two ATP-binding proteins (TauB), two transmembrane proteins (TauC) and a solute-binding protein (TauA).

It localises to the cell inner membrane. The catalysed reaction is taurine(out) + ATP + H2O = taurine(in) + ADP + phosphate + H(+). Part of the ABC transporter complex TauABC involved in taurine import. Responsible for energy coupling to the transport system. This chain is Taurine import ATP-binding protein TauB, found in Pseudomonas savastanoi pv. phaseolicola (strain 1448A / Race 6) (Pseudomonas syringae pv. phaseolicola (strain 1448A / Race 6)).